Here is a 318-residue protein sequence, read N- to C-terminus: Dihydroorotate dehydrogenase B (NAD(+)), catalytic subunit (318 aa).

FMN is bound by residues Ser-19 and 43-44; that span reads KT. Substrate-binding positions include Lys-43, 69–73, and Asn-125; that span reads NAMGL. Asn-125 is an FMN binding site. The Nucleophile role is filled by Cys-128. Residues Lys-164 and Val-192 each contribute to the FMN site. Residue 193–194 coordinates substrate; it reads NT. FMN is bound by residues Gly-219, 247 to 248, and 269 to 270; these read GG and AT.

This sequence belongs to the dihydroorotate dehydrogenase family. Type 1 subfamily. As to quaternary structure, heterotetramer of 2 PyrK and 2 PyrD type B subunits. FMN is required as a cofactor.

It is found in the cytoplasm. The catalysed reaction is (S)-dihydroorotate + NAD(+) = orotate + NADH + H(+). It participates in pyrimidine metabolism; UMP biosynthesis via de novo pathway; orotate from (S)-dihydroorotate (NAD(+) route): step 1/1. In terms of biological role, catalyzes the conversion of dihydroorotate to orotate with NAD(+) as electron acceptor. The protein is Dihydroorotate dehydrogenase B (NAD(+)), catalytic subunit (pyrD) of Methanopyrus kandleri (strain AV19 / DSM 6324 / JCM 9639 / NBRC 100938).